We begin with the raw amino-acid sequence, 680 residues long: DNA-directed RNA polymerase subunit beta' (680 aa).

Cys69, Cys71, Cys87, and Cys90 together coordinate Zn(2+). Mg(2+) is bound by residues Asp489, Asp491, and Asp493.

It belongs to the RNA polymerase beta' chain family. RpoC1 subfamily. As to quaternary structure, in plastids the minimal PEP RNA polymerase catalytic core is composed of four subunits: alpha, beta, beta', and beta''. When a (nuclear-encoded) sigma factor is associated with the core the holoenzyme is formed, which can initiate transcription. Mg(2+) serves as cofactor. Requires Zn(2+) as cofactor.

It localises to the plastid. The protein resides in the chloroplast. It carries out the reaction RNA(n) + a ribonucleoside 5'-triphosphate = RNA(n+1) + diphosphate. In terms of biological role, DNA-dependent RNA polymerase catalyzes the transcription of DNA into RNA using the four ribonucleoside triphosphates as substrates. The protein is DNA-directed RNA polymerase subunit beta' of Olimarabidopsis pumila (Dwarf rocket).